The following is a 165-amino-acid chain: Endoribonuclease YbeY (165 aa).

Zn(2+) is bound by residues His119, His123, and His129.

This sequence belongs to the endoribonuclease YbeY family. Zn(2+) is required as a cofactor.

Its subcellular location is the cytoplasm. In terms of biological role, single strand-specific metallo-endoribonuclease involved in late-stage 70S ribosome quality control and in maturation of the 3' terminus of the 16S rRNA. The chain is Endoribonuclease YbeY from Streptomyces griseus subsp. griseus (strain JCM 4626 / CBS 651.72 / NBRC 13350 / KCC S-0626 / ISP 5235).